The sequence spans 71 residues: Sperm-associated antigen 11A (71 aa).

Residues 1 to 19 (MIPRLLPFFASLLFAALLF) form the signal peptide. 3 disulfides stabilise this stretch: C32-C61, C39-C54, and C44-C62.

The protein belongs to the beta-defensin family.

The protein localises to the secreted. Its function is as follows. Has antimicrobial activity against E.coli. Plays a role in the defense response in the male reproductive tract, contributing to sperm maturation, storage and protection. The sequence is that of Sperm-associated antigen 11A from Mus musculus (Mouse).